The chain runs to 158 residues: Fibroblast growth factor 2 (158 aa).

The propeptide occupies 1–12 (MAAGAAGSITTL). Asn-39 contacts heparin. The heparin-binding stretch occupies residues 131 to 147 (KRTGQYKPGPKTGPGQK).

The protein belongs to the heparin-binding growth factors family.

The protein resides in the secreted. It is found in the nucleus. Acts as a ligand for FGFR1, FGFR2, FGFR3 and FGFR4. Also acts as an integrin ligand which is required for FGF2 signaling. Plays an important role in the regulation of cell survival, cell division, cell differentiation and cell migration. Functions as a potent mitogen in vitro. Can induce angiogenesis. The chain is Fibroblast growth factor 2 (FGF2) from Gallus gallus (Chicken).